The sequence spans 10061 residues: MATH and LRR domain-containing protein PFE0570w (10061 aa).

3 disordered regions span residues 166-210 (DMDN…EKKN), 244-471 (NNSD…NDIN), and 1004-1170 (DDQK…DTSF). The span at 169-179 (NNPNNHVSNNG) shows a compositional bias: polar residues. Over residues 193–205 (TSNSIHKNNNTNI) the composition is skewed to low complexity. Positions 270 to 282 (KKSDNNNDKKNDD) are enriched in basic and acidic residues. The segment covering 285–320 (NNNNNNNNNNNNNNNNNDNHVCTSNNQPNTINKQNN) has biased composition (low complexity). The segment covering 328–338 (DQNGRTKITPQ) has biased composition (polar residues). Positions 338 to 366 (QNVNQKEKEIKNVVKEKNNFNREEKDITN) form a coiled coil. A compositionally biased stretch (basic and acidic residues) spans 342–365 (QKEKEIKNVVKEKNNFNREEKDIT). Over residues 366-375 (NSDDYDENST) the composition is skewed to acidic residues. Composition is skewed to polar residues over residues 376-389 (DESC…TSSE) and 421-437 (VPSN…SAEN). Positions 431 to 469 (NVKSAENCNKEKKKKKKKKKKELNNDNKDNTLNNETMND) form a coiled coil. Over residues 441–451 (EKKKKKKKKKK) the composition is skewed to basic residues. Residues 460–471 (NTLNNETMNDIN) are compositionally biased toward low complexity. The span at 1025-1037 (NEEKPNVNKEGNI) shows a compositional bias: basic and acidic residues. Residues 1047-1057 (NKNKNNNNNNN) show a composition bias toward low complexity. The segment covering 1058-1132 (DKNDKNDKND…KKKKNGKEQN (75 aa)) has biased composition (basic and acidic residues). Positions 1133 to 1165 (EDSTESDDESSVIDDNYIDDDSCDCDSESDSID) are enriched in acidic residues. An MATH domain is found at 1328–1458 (NGKIELYIPN…SGGLLIKGKV (131 aa)). Positions 1651 to 1698 (GGNLQNEQKGDEDVKKEDVKKENVNKEEIKNGNNNNNNDENENEVDDN) are disordered. Over residues 1658–1680 (QKGDEDVKKEDVKKENVNKEEIK) the composition is skewed to basic and acidic residues. A coiled-coil region spans residues 1916 to 1948 (NYLSNLNKVKININDLNNNIVDVNNSIHNIEKE). Residues 1973-1995 (HKETSSIQNKGKEKSNNNIKSDD) are compositionally biased toward basic and acidic residues. 4 disordered regions span residues 1973-1998 (HKET…DNNN), 2155-2245 (LNKS…PSYK), 2427-2566 (YSDD…NNIK), and 3120-3139 (SNET…NEMK). Acidic residues predominate over residues 2216–2228 (NNDDKDDDDDDSY). Residues 2235 to 2245 (SDGKKNDPSYK) show a composition bias toward basic and acidic residues. A compositionally biased stretch (low complexity) spans 2475-2484 (NNNNNNNNMM). Composition is skewed to basic and acidic residues over residues 2487–2496 (DDNKVNKNEE) and 2505–2527 (QIKE…RNED). Composition is skewed to low complexity over residues 2552–2564 (NNNN…NNNN) and 3121–3133 (NETN…NRTN). Residues 2555–2580 (NNNNNNNNNNIKRLDDSYNKLLKNKN) are a coiled coil. Residues 3398–3418 (KLILKKIFMYLNIICMIIKYI) traverse the membrane as a helical segment. Disordered stretches follow at residues 3802–3826 (STND…YSKK), 3847–3890 (LTSG…DNNN), and 3919–3953 (ESND…EKKS). The span at 3809–3822 (VDRSDDSESNDDKK) shows a compositional bias: basic and acidic residues. A compositionally biased stretch (low complexity) spans 3851–3890 (NSSSKNSKKNSNNESIQMDNTNNSNSNNNNKNDNNNDNNN). Residues 3926 to 3941 (KNQNIQSNEQSVTPNR) show a composition bias toward polar residues. A compositionally biased stretch (basic and acidic residues) spans 3942–3953 (NIEENKDHEKKS). A coiled-coil region spans residues 3977–4001 (EHLGNATAVLNILQKKLENEELKKL). Basic and acidic residues predominate over residues 4039 to 4065 (VSAHKEKNVKTDSSDDKKKKEDNENNN). 6 disordered regions span residues 4039–4074 (VSAH…IIHN), 4155–4180 (KGNN…NNMG), 4352–4414 (SNNN…NNNN), 4919–4943 (NKRK…DNDN), 4991–5030 (DGLN…KNEK), and 5179–5207 (SKIA…KSNL). Over residues 4157–4178 (NNSKDNNNNNNNNNNNNNNKNN) the composition is skewed to low complexity. Residues 4399 to 4424 (NNNNNNNNNNNNNNNNVNKEIIKLNS) adopt a coiled-coil conformation. Composition is skewed to low complexity over residues 4929–4943 (NNNN…DNDN), 5004–5019 (NMNN…NNSN), and 5185–5202 (NGNN…NNNN). Positions 5006-5046 (NNVKNKNNNNNNSNNKRKKNEKNEKIDKIEQFLHESELEKD) form a coiled coil. 3 coiled-coil regions span residues 5486-5563 (NNNN…NIYE), 5728-5810 (DVLK…DKEE), and 5900-6022 (MNND…INNY). 3 stretches are compositionally biased toward basic and acidic residues: residues 5716–5732 (KDAK…VLKD), 5738–5811 (SNKE…KEEP), and 5909–5953 (NKNK…KKDN). 7 disordered regions span residues 5716–5816 (KDAK…QINE), 5892–6009 (EIIN…KKLK), 6123–6142 (KSET…VDGK), 6299–6338 (NDSI…DKGE), 6722–6760 (NMNN…NNNI), 7585–7730 (EDML…VEEK), and 7744–7787 (DLLS…KKSS). The span at 5954 to 5968 (NNSNNNNNNNNLSNN) shows a compositional bias: low complexity. The segment covering 5969–5978 (GEEDPNDSDS) has biased composition (acidic residues). The span at 5991–6003 (NKNINDDSDDNNK) shows a compositional bias: basic and acidic residues. Residues 6129–6138 (SNKNVESNDN) show a composition bias toward polar residues. 2 stretches are compositionally biased toward low complexity: residues 6314 to 6333 (SNSN…NNNN) and 6722 to 6759 (NMNN…NNNN). Residues 6719 to 6743 (NMNNMNNNNNNNNNNNNNNNNNNNN) are a coiled coil. Over residues 7585–7599 (EDMLHSKKTDVIQHG) the composition is skewed to basic and acidic residues. Positions 7600-7685 (DEEEDDEEDD…EHINEEEQED (86 aa)) are enriched in acidic residues. Coiled-coil stretches lie at residues 7601–7637 (EEED…DIED), 7710–7813 (NTKI…NKNE), 7934–7961 (KTDE…IDNE), and 8217–8241 (NINN…GKRE). A compositionally biased stretch (basic residues) spans 7749-7765 (SKKKNHKDKRNASKNKN). Positions 7766–7786 (KNKDILKKNENNINDEKEKKS) are enriched in basic and acidic residues. 3 disordered regions span residues 8189–8252 (ETGG…GGEE), 8293–8380 (GKVS…IIMS), and 8474–8497 (KKKN…MDEE). The segment covering 8218–8242 (INNKEKETNKNEEQQQGEAEGKREG) has biased composition (basic and acidic residues). The segment covering 8243 to 8252 (EGEEGEGGEE) has biased composition (acidic residues). Over residues 8305–8314 (LLNDKEHEKD) the composition is skewed to basic and acidic residues. Over residues 8315–8363 (NEDNDEDNDEDDDDEDDDEDDEDDDDDDDDDDDDDDDDDYDEDYDEDYD) the composition is skewed to acidic residues. Residues 8364 to 8374 (EKLVENKKNER) are compositionally biased toward basic and acidic residues. Residues 8478-8492 (YSNNNIYNNNSSNKV) are compositionally biased toward low complexity. Coiled coils occupy residues 8644–8697 (SETL…ELNN), 8882–8907 (QYLE…VDNY), and 9219–9247 (IDMK…SNNN). Disordered regions lie at residues 9759 to 9779 (TIPR…NNNS), 9891 to 9926 (SNTS…SSSN), and 9985 to 10061 (KNNS…NNIY). Composition is skewed to low complexity over residues 9764-9779 (NTTT…NNNS), 9899-9926 (NSSN…SSSN), and 9986-10022 (NNSI…NNNT). The segment covering 10031–10041 (IFQQNQNHSDT) has biased composition (polar residues). Low complexity predominate over residues 10042–10061 (NNNNNNNNKNNSNNNNNNIY).

It is found in the membrane. The sequence is that of MATH and LRR domain-containing protein PFE0570w from Plasmodium falciparum (isolate 3D7).